We begin with the raw amino-acid sequence, 503 residues long: Maturase K (503 aa).

The protein belongs to the intron maturase 2 family. MatK subfamily.

The protein resides in the plastid. Its subcellular location is the chloroplast. Functionally, usually encoded in the trnK tRNA gene intron. Probably assists in splicing its own and other chloroplast group II introns. In Rosa rugosa (Rugosa rose), this protein is Maturase K.